The chain runs to 444 residues: UDP-N-acetylglucosamine 1-carboxyvinyltransferase (444 aa).

22-23 (KN) contacts phosphoenolpyruvate. Arginine 94 is a UDP-N-acetyl-alpha-D-glucosamine binding site. The Proton donor role is filled by aspartate 119. The UDP-N-acetyl-alpha-D-glucosamine site is built by aspartate 309 and valine 331.

This sequence belongs to the EPSP synthase family. MurA subfamily.

Its subcellular location is the cytoplasm. It carries out the reaction phosphoenolpyruvate + UDP-N-acetyl-alpha-D-glucosamine = UDP-N-acetyl-3-O-(1-carboxyvinyl)-alpha-D-glucosamine + phosphate. The protein operates within cell wall biogenesis; peptidoglycan biosynthesis. In terms of biological role, cell wall formation. Adds enolpyruvyl to UDP-N-acetylglucosamine. In Chlamydia abortus (strain DSM 27085 / S26/3) (Chlamydophila abortus), this protein is UDP-N-acetylglucosamine 1-carboxyvinyltransferase.